Here is a 421-residue protein sequence, read N- to C-terminus: Imidazolonepropionase (421 aa).

2 residues coordinate Fe(3+): H80 and H82. 2 residues coordinate Zn(2+): H80 and H82. 4-imidazolone-5-propanoate-binding residues include R89, Y152, and H185. An N-formimidoyl-L-glutamate-binding site is contributed by Y152. Position 249 (H249) interacts with Fe(3+). Residue H249 coordinates Zn(2+). E252 serves as a coordination point for 4-imidazolone-5-propanoate. D324 lines the Fe(3+) pocket. Residue D324 coordinates Zn(2+). N-formimidoyl-L-glutamate is bound by residues N326 and G328. Residue S329 participates in 4-imidazolone-5-propanoate binding.

This sequence belongs to the metallo-dependent hydrolases superfamily. HutI family. Homodimer. It depends on Zn(2+) as a cofactor. Fe(3+) is required as a cofactor.

It localises to the cytoplasm. The catalysed reaction is 4-imidazolone-5-propanoate + H2O = N-formimidoyl-L-glutamate. The protein operates within amino-acid degradation; L-histidine degradation into L-glutamate; N-formimidoyl-L-glutamate from L-histidine: step 3/3. Functionally, catalyzes the hydrolytic cleavage of the carbon-nitrogen bond in imidazolone-5-propanoate to yield N-formimidoyl-L-glutamate. It is the third step in the universal histidine degradation pathway. This Bacillus subtilis (strain 168) protein is Imidazolonepropionase.